The chain runs to 380 residues: Pregnancy-associated glycoprotein 4 (380 aa).

The signal sequence occupies residues 1–15; it reads MKWLVLLGLVAFSEC. Positions 16–53 are cleaved as a propeptide — activation peptide; the sequence is IFKIPLRRVKTMRKTLSGKNMLNDVLKEHPYRLPQISF. The Peptidase A1 domain maps to 71-377; that stretch reads YVGNITIGTP…DRGNDRIGLA (307 aa). Asn-74 carries an N-linked (GlcNAc...) asparagine glycan. Asp-89 is an active-site residue. A disulfide bond links Cys-102 and Cys-107. Asn-125 carries an N-linked (GlcNAc...) asparagine glycan. A disulfide bond links Cys-261 and Cys-265. Residue Asp-270 is part of the active site. Cys-303 and Cys-337 form a disulfide bridge.

The protein belongs to the peptidase A1 family. In terms of tissue distribution, trophoblast and placental tissue. Produced specifically in the invasive binucleate cells of the placenta.

The protein resides in the secreted. Its subcellular location is the extracellular space. The polypeptide is Pregnancy-associated glycoprotein 4 (Ovis aries (Sheep)).